A 505-amino-acid polypeptide reads, in one-letter code: Proton-coupled zinc antiporter SLC30A1 (505 aa).

Residues methionine 1–arginine 10 lie on the Cytoplasmic side of the membrane. A helical membrane pass occupies residues leucine 11 to valine 31. Residues threonine 32–leucine 35 are Extracellular-facing. Residues alanine 36–valine 56 form a helical membrane-spanning segment. 2 residues coordinate Zn(2+): histidine 43 and aspartate 47. Residues alanine 57 to methionine 80 are Cytoplasmic-facing. Residues glycine 81 to isoleucine 101 traverse the membrane as a helical segment. Topologically, residues glutamate 102 to proline 113 are extracellular. The helical transmembrane segment at leucine 114–phenylalanine 134 threads the bilayer. Residues histidine 135–valine 246 lie on the Cytoplasmic side of the membrane. A disordered region spans residues glutamine 142–threonine 215. Residues threonine 187–glycine 199 show a composition bias toward polar residues. Residues aspartate 203–aspartate 214 are compositionally biased toward basic and acidic residues. A helical transmembrane segment spans residues phenylalanine 247 to phenylalanine 267. 2 residues coordinate Zn(2+): histidine 249 and aspartate 253. Topologically, residues tyrosine 268–alanine 306 are extracellular. The N-linked (GlcNAc...) asparagine glycan is linked to asparagine 297. Residues glycine 307–leucine 327 traverse the membrane as a helical segment. The Cytoplasmic segment spans residues tyrosine 328 to leucine 505. At serine 504 the chain carries Phosphoserine.

It belongs to the cation diffusion facilitator (CDF) transporter (TC 2.A.4) family. SLC30A subfamily. In terms of assembly, homodimer. Interacts with TMEM163. Interacts and forms a complex with TMC6 and TMC8; the interaction regulates zinc transport into the ER.

It localises to the cell membrane. The protein resides in the basolateral cell membrane. It is found in the cytoplasmic vesicle membrane. The protein localises to the cytoplasm. Its subcellular location is the endoplasmic reticulum membrane. It localises to the golgi apparatus membrane. The protein resides in the nucleus membrane. It catalyses the reaction Zn(2+)(in) + 2 H(+)(out) = Zn(2+)(out) + 2 H(+)(in). Zinc ion:proton antiporter that could function at the plasma membrane mediating zinc efflux from cells against its electrochemical gradient protecting them from intracellular zinc accumulation and toxicity. Alternatively, could prevent the transport to the plasma membrane of CACNB2, the L-type calcium channels regulatory subunit, through a yet to be defined mechanism. By modulating the expression of these channels at the plasma membrane, could prevent calcium and zinc influx into cells. By the same mechanism, could also prevent L-type calcium channels-mediated heavy metal influx into cells. In some cells, could also function as a zinc ion:proton antiporter mediating zinc entry into the lumen of cytoplasmic vesicles. In macrophages, can increase zinc ions concentration into the lumen of cytoplasmic vesicles containing engulfed bacteria and could help inactivate them. Forms a complex with TMC6/EVER1 and TMC8/EVER2 at the ER membrane of keratynocytes which facilitates zinc uptake into the ER. Down-regulates the activity of transcription factors induced by zinc and cytokines. This is Proton-coupled zinc antiporter SLC30A1 from Macaca fascicularis (Crab-eating macaque).